Here is a 254-residue protein sequence, read N- to C-terminus: Transcription factor bHLH51 (254 aa).

Residues 62-111 enclose the bHLH domain; that stretch reads SLSRSHRLAEKRRRDRINSHLTALRKLVPNSDKLDKAALLATVIEQVKEL.

In terms of assembly, homodimer. In terms of tissue distribution, expressed constitutively in roots, stems, and flowers.

The protein resides in the nucleus. The chain is Transcription factor bHLH51 (BHLH51) from Arabidopsis thaliana (Mouse-ear cress).